Here is a 1264-residue protein sequence, read N- to C-terminus: Kinesin-like protein KIN-14B (1264 aa).

A compositionally biased stretch (polar residues) spans Met-1–Trp-10. Positions Met-1–Ser-52 are disordered. The segment covering Glu-18 to His-30 has biased composition (basic and acidic residues). Residues Glu-53 to Glu-84 are a coiled coil. The 315-residue stretch at Asn-138–Thr-452 folds into the Kinesin motor domain. Gly-219–Thr-226 serves as a coordination point for ATP. Coiled coils occupy residues Ile-462 to Val-511, Gln-545 to Asp-592, and Thr-617 to Lys-640. The interval Ala-588 to Ala-615 is disordered. Over residues Leu-589 to Leu-600 the composition is skewed to basic and acidic residues. Residues Ser-652 to Gln-668 show a composition bias toward low complexity. 2 disordered regions span residues Ser-652–Lys-684 and Pro-1117–Ser-1136.

Belongs to the TRAFAC class myosin-kinesin ATPase superfamily. Kinesin family. KIN-14 subfamily. Homodimer and heterodimer with KCA1. Interacts with CDKA-1. Interacts with At4g14310. As to expression, expressed in roots, leaves, stems and flowers.

The protein localises to the cell membrane. In terms of biological role, kinesin-like protein required for chloroplast movements and anchor to the plasma membrane. Mediates chloroplast movement via chloroplast actin (cp-actin) filaments. Required for the chloroplast avoidance response under high intensity blue light. Mediates redundantly with CHUP1 the nuclear avoidance response under high intensity blue light. May be involved in division plane determination. This chain is Kinesin-like protein KIN-14B, found in Arabidopsis thaliana (Mouse-ear cress).